The chain runs to 757 residues: RNA-directed RNA polymerase catalytic subunit (757 aa).

The interval 50-82 (SEKGKWTTNTETGAPQLNPIDGPLPEDNEPSGY) is disordered. The span at 55 to 64 (WTTNTETGAP) shows a compositional bias: polar residues. 2 short sequence motifs (nuclear localization signal) span residues 187 to 195 (RKRRVRDNM) and 203 to 216 (RTIGKKKQRVNKRS). The tract at residues 249–256 (RGFVYFVE) is promoter-binding site. Positions 286–483 (VRKMMTNSQD…GINMSKKKSY (198 aa)) constitute a RdRp catalytic domain.

Belongs to the influenza viruses polymerase PB1 family. In terms of assembly, influenza RNA polymerase is composed of three subunits: PB1, PB2 and PA. Interacts (via N-terminus) with PA (via C-terminus). Interacts (via C-terminus) with PB2 (via N-terminus); this interaction is essential for transcription initiation. Phosphorylated by host PRKCA.

It localises to the host nucleus. The protein localises to the host cytoplasm. The catalysed reaction is RNA(n) + a ribonucleoside 5'-triphosphate = RNA(n+1) + diphosphate. Functionally, RNA-dependent RNA polymerase which is responsible for replication and transcription of virus RNA segments. The transcription of viral mRNAs occurs by a unique mechanism called cap-snatching. 5' methylated caps of cellular mRNAs are cleaved after 10-13 nucleotides by PA. In turn, these short capped RNAs are used as primers by PB1 for transcription of viral mRNAs. During virus replication, PB1 initiates RNA synthesis and copy vRNA into complementary RNA (cRNA) which in turn serves as a template for the production of more vRNAs. This chain is RNA-directed RNA polymerase catalytic subunit, found in Influenza A virus (strain A/Memphis/110/1976 H3N2).